Reading from the N-terminus, the 1173-residue chain is AT-rich interactive domain-containing protein 5B (1173 aa).

Lysine 130 participates in a covalent cross-link: Glycyl lysine isopeptide (Lys-Gly) (interchain with G-Cter in SUMO2). The disordered stretch occupies residues 249-283; sequence PNLKGRPRKKKPCPQRRDSFSGGKDPNNNSDGKSV. Basic residues predominate over residues 253–262; sequence GRPRKKKPCP. Serine 267 is modified (phosphoserine). Residues 322–414 form the ARID domain; the sequence is RADEQAFLVA…LILPYERFIK (93 aa). The residue at position 340 (lysine 340) is an N6,N6-dimethyllysine. The tract at residues 416 to 607 is disordered; it reads EEDKPLPPIK…QPPLANQSEV (192 aa). A Glycyl lysine isopeptide (Lys-Gly) (interchain with G-Cter in SUMO2) cross-link involves residue lysine 449. The segment covering 450–462 has biased composition (basic and acidic residues); the sequence is HEISKSKKEKENA. Residues lysine 497 and lysine 499 each participate in a glycyl lysine isopeptide (Lys-Gly) (interchain with G-Cter in SUMO2) cross-link. Positions 547-557 are enriched in low complexity; it reads SAPLAPTPGTG. A compositionally biased stretch (polar residues) spans 593 to 605; the sequence is GFSTTQPPLANQS. Residues lysine 763 and lysine 769 each participate in a glycyl lysine isopeptide (Lys-Gly) (interchain with G-Cter in SUMO2) cross-link. 3 disordered regions span residues 777 to 802, 877 to 924, and 936 to 965; these read EPRF…VEKR, KKSA…GTSQ, and HPKA…KPHP. Residues 782 to 796 show a composition bias toward basic residues; it reads FSKHHLSPSKKSRGR. Residues lysine 878, lysine 901, lysine 905, and lysine 920 each participate in a glycyl lysine isopeptide (Lys-Gly) (interchain with G-Cter in SUMO2) cross-link. Residues lysine 973, lysine 985, and lysine 998 each participate in a glycyl lysine isopeptide (Lys-Gly) (interchain with G-Cter in SUMO2) cross-link. Phosphoserine is present on serine 1017. The segment at 1017 to 1055 is disordered; that stretch reads SPLDPAKEVSGKEKASEQESEGSKAAHSGHSGGTSEGHK. Over residues 1021–1040 the composition is skewed to basic and acidic residues; that stretch reads PAKEVSGKEKASEQESEGSK. Residues lysine 1040 and lysine 1055 each participate in a glycyl lysine isopeptide (Lys-Gly) (interchain with G-Cter in SUMO2) cross-link. Serine 1118 carries the post-translational modification Phosphoserine.

This sequence belongs to the ARID5B family. Post-translationally, methylation at Lys-340 prevents DNA-binding. Demethylation by PHF2 promotes recruitment of the PHF2-ARID5B complex to promoters.

The protein localises to the nucleus. Its function is as follows. Transcription coactivator that binds to the 5'-AATA[CT]-3' core sequence and plays a key role in adipogenesis and liver development. Acts by forming a complex with phosphorylated PHF2, which mediates demethylation at Lys-340, leading to target the PHF2-ARID5B complex to target promoters, where PHF2 mediates demethylation of dimethylated 'Lys-9' of histone H3 (H3K9me2), followed by transcription activation of target genes. The PHF2-ARID5B complex acts as a coactivator of HNF4A in liver. Required for adipogenesis: regulates triglyceride metabolism in adipocytes by regulating expression of adipogenic genes. Overexpression leads to induction of smooth muscle marker genes, suggesting that it may also act as a regulator of smooth muscle cell differentiation and proliferation. This Bos taurus (Bovine) protein is AT-rich interactive domain-containing protein 5B (ARID5B).